The sequence spans 364 residues: DNA replication and repair protein RecF (364 aa).

ATP is bound at residue 30-37 (GANGSGKT).

It belongs to the RecF family.

It is found in the cytoplasm. Functionally, the RecF protein is involved in DNA metabolism; it is required for DNA replication and normal SOS inducibility. RecF binds preferentially to single-stranded, linear DNA. It also seems to bind ATP. The chain is DNA replication and repair protein RecF from Sodalis glossinidius.